The primary structure comprises 176 residues: MTTIVSVRRNGHVVIAGDGQATLGNTVMKGNVKKVRRLYNDKVIAGFAGGTADAFTLFELFERKLEMHQGHLIKAAVELAKDWRTDRMLRKLEALLAVADETASLIITGNGDVVQPENDLIAIGSGGPYAQAAARALLENTELSAREIAEKALDIAGDICIYTNHFHTIEELSYKA.

T2 is an active-site residue. The Na(+) site is built by G157, C160, and T163.

The protein belongs to the peptidase T1B family. HslV subfamily. As to quaternary structure, a double ring-shaped homohexamer of HslV is capped on each side by a ring-shaped HslU homohexamer. The assembly of the HslU/HslV complex is dependent on binding of ATP.

The protein resides in the cytoplasm. The enzyme catalyses ATP-dependent cleavage of peptide bonds with broad specificity.. With respect to regulation, allosterically activated by HslU binding. In terms of biological role, protease subunit of a proteasome-like degradation complex believed to be a general protein degrading machinery. The protein is ATP-dependent protease subunit HslV of Escherichia coli O45:K1 (strain S88 / ExPEC).